The sequence spans 265 residues: uncharacterized protein (265 aa).

Disordered regions lie at residues 62–94 (RNKK…ALGK) and 118–149 (MVPG…RPNP). Residues 126–139 (DGPKKSDTDIKDAV) are compositionally biased toward basic and acidic residues.

This is an uncharacterized protein from Homo sapiens (Human).